The chain runs to 323 residues: Acetylglutamate kinase (323 aa).

Residues G90–G91, R112, and N218 each bind substrate.

This sequence belongs to the acetylglutamate kinase family. ArgB subfamily.

The protein localises to the cytoplasm. It carries out the reaction N-acetyl-L-glutamate + ATP = N-acetyl-L-glutamyl 5-phosphate + ADP. Its pathway is amino-acid biosynthesis; L-arginine biosynthesis; N(2)-acetyl-L-ornithine from L-glutamate: step 2/4. In terms of biological role, catalyzes the ATP-dependent phosphorylation of N-acetyl-L-glutamate. This Ehrlichia canis (strain Jake) protein is Acetylglutamate kinase.